Here is a 184-residue protein sequence, read N- to C-terminus: Inosine triphosphate pyrophosphatase (184 aa).

9-14 (TSNASK) is an ITP binding site. A Mg(2+)-binding site is contributed by Glu38. ITP is bound by residues Lys50, 66–67 (DT), Lys83, 142–145 (FGWD), Lys163, and 168–169 (HR).

The protein belongs to the HAM1 NTPase family. In terms of assembly, homodimer. Mg(2+) is required as a cofactor. Requires Mn(2+) as cofactor.

The protein localises to the cytoplasm. It is found in the nucleus. The catalysed reaction is ITP + H2O = IMP + diphosphate + H(+). It catalyses the reaction dITP + H2O = dIMP + diphosphate + H(+). The enzyme catalyses XTP + H2O = XMP + diphosphate + H(+). Its function is as follows. Pyrophosphatase that hydrolyzes non-canonical purine nucleotides such as inosine triphosphate (ITP), deoxyinosine triphosphate (dITP) or xanthosine 5'-triphosphate (XTP) to their respective monophosphate derivatives. The enzyme does not distinguish between the deoxy- and ribose forms. Probably excludes non-canonical purines from RNA and DNA precursor pools, thus preventing their incorporation into RNA and DNA and avoiding chromosomal lesions. The protein is Inosine triphosphate pyrophosphatase of Tuber melanosporum (strain Mel28) (Perigord black truffle).